The following is a 434-amino-acid chain: Gamma-glutamyl phosphate reductase (434 aa).

It belongs to the gamma-glutamyl phosphate reductase family.

Its subcellular location is the cytoplasm. It catalyses the reaction L-glutamate 5-semialdehyde + phosphate + NADP(+) = L-glutamyl 5-phosphate + NADPH + H(+). The protein operates within amino-acid biosynthesis; L-proline biosynthesis; L-glutamate 5-semialdehyde from L-glutamate: step 2/2. Its function is as follows. Catalyzes the NADPH-dependent reduction of L-glutamate 5-phosphate into L-glutamate 5-semialdehyde and phosphate. The product spontaneously undergoes cyclization to form 1-pyrroline-5-carboxylate. The protein is Gamma-glutamyl phosphate reductase of Nostoc sp. (strain PCC 7120 / SAG 25.82 / UTEX 2576).